Here is a 141-residue protein sequence, read N- to C-terminus: Large ribosomal subunit protein uL16 (141 aa).

This sequence belongs to the universal ribosomal protein uL16 family. As to quaternary structure, part of the 50S ribosomal subunit.

Binds 23S rRNA and is also seen to make contacts with the A and possibly P site tRNAs. In Deinococcus geothermalis (strain DSM 11300 / CIP 105573 / AG-3a), this protein is Large ribosomal subunit protein uL16.